The following is a 256-amino-acid chain: Small ribosomal subunit protein uS3 (256 aa).

The KH type-2 domain maps to 39–121 (IRTYLTKQLS…TIRINVVEVT (83 aa)). A disordered region spans residues 227 to 256 (RHEQKFPLQQPKRRQQRRRPTFEDRSAQEA). A compositionally biased stretch (basic and acidic residues) spans 246–256 (PTFEDRSAQEA).

The protein belongs to the universal ribosomal protein uS3 family. In terms of assembly, part of the 30S ribosomal subunit. Forms a tight complex with proteins S10 and S14.

Functionally, binds the lower part of the 30S subunit head. Binds mRNA in the 70S ribosome, positioning it for translation. The sequence is that of Small ribosomal subunit protein uS3 from Synechococcus sp. (strain JA-2-3B'a(2-13)) (Cyanobacteria bacterium Yellowstone B-Prime).